The sequence spans 1514 residues: ABC transporter C family member 3 (1514 aa).

Helical transmembrane passes span Pro35–Phe55, Ala83–Phe103, Leu116–Leu136, Leu153–Tyr173, Leu183–Leu203, Ile325–Leu345, Tyr364–Phe386, Trp439–Tyr459, Gly463–Phe483, and Phe551–Leu571. Residues Ile325 to Gln606 enclose the ABC transmembrane type-1 1 domain. The region spanning Val640 to Ala863 is the ABC transporter 1 domain. Gly675–Ser682 contributes to the ATP binding site. The next 5 helical transmembrane spans lie at Tyr940–Phe960, Leu987–Leu1007, Ile1077–Val1097, Leu1181–Ile1201, and Leu1205–Trp1225. The region spanning Val950–Asn1232 is the ABC transmembrane type-1 2 domain. The ABC transporter 2 domain occupies Ile1271 to Ala1503. Gly1303–Ser1310 contributes to the ATP binding site.

It belongs to the ABC transporter superfamily. ABCC family. Conjugate transporter (TC 3.A.1.208) subfamily. Ubiquitous.

Its subcellular location is the membrane. It carries out the reaction ATP + H2O + xenobioticSide 1 = ADP + phosphate + xenobioticSide 2.. Its activity is regulated as follows. Glutathione-conjugate transport is inhibited by decyl-glutathione and, to a lower extent, by GS-GS, but not by GSH. All transports are inhibited by vanadate. Pump for glutathione S-conjugates. Mediates the transport of glutathione conjugates such as chlorodinitrobenzene-GS (DNB-GS), and of chlorophyll catabolites such as Bn-NCC-1. Also transports heavy metals such as cadmium (Cd). This is ABC transporter C family member 3 (ABCC3) from Arabidopsis thaliana (Mouse-ear cress).